We begin with the raw amino-acid sequence, 438 residues long: UDP-N-acetylmuramoylalanine--D-glutamate ligase (438 aa).

Gly112 to Thr118 contributes to the ATP binding site.

The protein belongs to the MurCDEF family. The cofactor is Mg(2+).

Its subcellular location is the cytoplasm. The enzyme catalyses UDP-N-acetyl-alpha-D-muramoyl-L-alanine + D-glutamate + ATP = UDP-N-acetyl-alpha-D-muramoyl-L-alanyl-D-glutamate + ADP + phosphate + H(+). It participates in cell wall biogenesis; peptidoglycan biosynthesis. Its function is as follows. Cell wall formation. Catalyzes the addition of glutamate to the nucleotide precursor UDP-N-acetylmuramoyl-L-alanine (UMA). The chain is UDP-N-acetylmuramoylalanine--D-glutamate ligase (murD) from Escherichia coli (strain K12).